We begin with the raw amino-acid sequence, 301 residues long: Glycine--tRNA ligase alpha subunit (301 aa).

Belongs to the class-II aminoacyl-tRNA synthetase family. Tetramer of two alpha and two beta subunits.

It is found in the cytoplasm. The enzyme catalyses tRNA(Gly) + glycine + ATP = glycyl-tRNA(Gly) + AMP + diphosphate. In Shewanella frigidimarina (strain NCIMB 400), this protein is Glycine--tRNA ligase alpha subunit.